The following is a 345-amino-acid chain: Holliday junction branch migration complex subunit RuvB (345 aa).

The tract at residues 1-182 is large ATPase domain (RuvB-L); the sequence is MDQRIIASSS…FGIVQRLEFY (182 aa). Residues isoleucine 21, arginine 22, glycine 63, lysine 66, threonine 67, threonine 68, 129 to 131, arginine 172, tyrosine 182, and arginine 219 contribute to the ATP site; that span reads EDF. Residue threonine 67 coordinates Mg(2+). The tract at residues 183–253 is small ATPAse domain (RuvB-S); sequence SPQELTRIVI…VAQAAMQMLK (71 aa). Residues 256 to 345 form a head domain (RuvB-H) region; that stretch reads PEGFDELDRR…PGIGEPGDLF (90 aa). The DNA site is built by arginine 292, arginine 311, and arginine 316.

The protein belongs to the RuvB family. In terms of assembly, homohexamer. Forms an RuvA(8)-RuvB(12)-Holliday junction (HJ) complex. HJ DNA is sandwiched between 2 RuvA tetramers; dsDNA enters through RuvA and exits via RuvB. An RuvB hexamer assembles on each DNA strand where it exits the tetramer. Each RuvB hexamer is contacted by two RuvA subunits (via domain III) on 2 adjacent RuvB subunits; this complex drives branch migration. In the full resolvosome a probable DNA-RuvA(4)-RuvB(12)-RuvC(2) complex forms which resolves the HJ.

Its subcellular location is the cytoplasm. It carries out the reaction ATP + H2O = ADP + phosphate + H(+). The RuvA-RuvB-RuvC complex processes Holliday junction (HJ) DNA during genetic recombination and DNA repair, while the RuvA-RuvB complex plays an important role in the rescue of blocked DNA replication forks via replication fork reversal (RFR). RuvA specifically binds to HJ cruciform DNA, conferring on it an open structure. The RuvB hexamer acts as an ATP-dependent pump, pulling dsDNA into and through the RuvAB complex. RuvB forms 2 homohexamers on either side of HJ DNA bound by 1 or 2 RuvA tetramers; 4 subunits per hexamer contact DNA at a time. Coordinated motions by a converter formed by DNA-disengaged RuvB subunits stimulates ATP hydrolysis and nucleotide exchange. Immobilization of the converter enables RuvB to convert the ATP-contained energy into a lever motion, pulling 2 nucleotides of DNA out of the RuvA tetramer per ATP hydrolyzed, thus driving DNA branch migration. The RuvB motors rotate together with the DNA substrate, which together with the progressing nucleotide cycle form the mechanistic basis for DNA recombination by continuous HJ branch migration. Branch migration allows RuvC to scan DNA until it finds its consensus sequence, where it cleaves and resolves cruciform DNA. The chain is Holliday junction branch migration complex subunit RuvB from Xanthomonas oryzae pv. oryzae (strain MAFF 311018).